Reading from the N-terminus, the 155-residue chain is UPF0303 protein lp_3613 (155 aa).

This sequence belongs to the UPF0303 family.

The chain is UPF0303 protein lp_3613 from Lactiplantibacillus plantarum (strain ATCC BAA-793 / NCIMB 8826 / WCFS1) (Lactobacillus plantarum).